The sequence spans 257 residues: Pimeloyl-[acyl-carrier protein] methyl ester esterase (257 aa).

The region spanning leucine 16 to serine 240 is the AB hydrolase-1 domain. Substrate-binding positions include tryptophan 22, serine 82 to leucine 83, and phenylalanine 143 to glutamine 147. The active-site Nucleophile is the serine 82. Active-site residues include aspartate 207 and histidine 235. Residue histidine 235 participates in substrate binding.

It belongs to the AB hydrolase superfamily. Carboxylesterase BioH family. As to quaternary structure, monomer.

It is found in the cytoplasm. It catalyses the reaction 6-carboxyhexanoyl-[ACP] methyl ester + H2O = 6-carboxyhexanoyl-[ACP] + methanol + H(+). Its pathway is cofactor biosynthesis; biotin biosynthesis. Its function is as follows. The physiological role of BioH is to remove the methyl group introduced by BioC when the pimeloyl moiety is complete. It allows to synthesize pimeloyl-ACP via the fatty acid synthetic pathway through the hydrolysis of the ester bonds of pimeloyl-ACP esters. The sequence is that of Pimeloyl-[acyl-carrier protein] methyl ester esterase from Aliivibrio fischeri (strain ATCC 700601 / ES114) (Vibrio fischeri).